A 2642-amino-acid chain; its full sequence is Fusarielin synthase FSL1 (2642 aa).

A Ketosynthase family 3 (KS3) domain is found at 6–450 (NEPIAIIGTG…GTNAHAILEA (445 aa)). Residues cysteine 179, histidine 318, and histidine 370 each act as for beta-ketoacyl synthase activity in the active site. The segment at 566 to 890 (VFTGQGAQWA…PYTSALVRGK (325 aa)) is malonyl-CoA:ACP transacylase (MAT) domain. Serine 659 serves as the catalytic For malonyltransferase activity. The interval 965 to 1101 (HDLLGIQTAD…GKVCIFLQTE (137 aa)) is N-terminal hotdog fold. The tract at residues 965 to 1279 (HDLLGIQTAD…SFSPFAAATD (315 aa)) is dehydratase (DH) domain. A PKS/mFAS DH domain is found at 965 to 1280 (HDLLGIQTAD…FSPFAAATDR (316 aa)). Histidine 997 (proton acceptor; for dehydratase activity) is an active-site residue. A C-terminal hotdog fold region spans residues 1126-1280 (MAGIDVERFY…FSPFAAATDR (155 aa)). Aspartate 1189 acts as the Proton donor; for dehydratase activity in catalysis. A methyltransferase (MET) domain region spans residues 1423–1622 (NYLDRYYTHA…GVDTNTPMPD (200 aa)). Residues 2244–2423 (TYWMLGLTGD…GHNAAVIDIS (180 aa)) form a ketoreductase (KR) domain region. Residues 2556 to 2635 (QEVTSVLTSC…DLADYILESL (80 aa)) enclose the Carrier domain. Residue serine 2595 is modified to O-(pantetheine 4'-phosphoryl)serine.

Requires pantetheine 4'-phosphate as cofactor.

Its pathway is secondary metabolite biosynthesis. Functionally, reducing polyketide synthase; part of the gene cluster that mediates the biosynthesis of fusarielins F, G and H, decaketide compounds with 5 methylations and a decaline core that act as mycoestrogens as they stimulate growth of MCF-7 breast cancer cells. The initial compound in the pathway is produced by the reducing polyketide synthase FSL1. FSL1 lacks an active enoyl reductase (ER) domain and biosynthesis of fusarielins relies on the trans-acting enoyl reductase FSL5, before it is released through hydrolysis catalyzed by the thioesterase FSL2. Fusarielins F, G, and H have a C11=C12 cis double bond and is fully reduced between C10 and C11 and between C12 and C13. FSL3 can be involved in the formation of the C11=C12 cis double bond by moving a hypothetical C10=C11 or C12=C13 trans double bond to form prefusarielin. Prefusarielin is oxygenated at C15 and C16 by the cytochrome P450 monooxygenase FSL4, resulting in fusarielin F, which subsequently is epoxidized into fusarielin G by the same enzyme. The final step in the pathway is a reduction of the carboxylic acid moiety to yield fusarielin H via a still undetermined mechanism. This is Fusarielin synthase FSL1 from Gibberella zeae (strain ATCC MYA-4620 / CBS 123657 / FGSC 9075 / NRRL 31084 / PH-1) (Wheat head blight fungus).